The primary structure comprises 433 residues: Staphylopine synthase (433 aa).

NADP(+)-binding positions include Thr9–Val12, Arg33, Ser37–Ser40, and Asp99. His216 (proton donor/acceptor) is an active-site residue.

Belongs to the staphylopine dehydrogenase family. In terms of assembly, homodimer.

The enzyme catalyses staphylopine + NADP(+) + H2O = (2S)-2-amino-4-{[(1R)-1-carboxy-2-(1H-imidazol-4-yl)ethyl]amino}butanoate + pyruvate + NADPH + H(+). Its function is as follows. Catalyzes the NADPH-dependent reductive condensation of pyruvate to the intermediate formed by the adjacently encoded enzyme CntL, namely (2S)-2-amino-4-{[(1R)-1-carboxy-2-(1H-imidazol-4-yl)ethyl]amino}butanoate, leading to the production of staphylopine. This is the last step in the biosynthesis of the metallophore staphylopine, which is involved in the acquisition of nickel, cobalt, zinc, copper, and iron, and thus enables bacterial growth inside the host, where metal access is limited. Therefore, this enzyme probably contributes to staphylococcal virulence. Can use neither NADH nor alpha-ketoglutarate in place of NADPH and pyruvate, respectively. This Staphylococcus aureus (strain Mu50 / ATCC 700699) protein is Staphylopine synthase.